Reading from the N-terminus, the 62-residue chain is Large ribosomal subunit protein eL24 (62 aa).

Positions 7, 10, 33, and 37 each coordinate Zn(2+). The segment at 7–37 (CSFCGREIEPGTGIMYVKNDGSILWFCSRKC) adopts a C4-type zinc-finger fold.

It belongs to the eukaryotic ribosomal protein eL24 family. As to quaternary structure, part of the 50S ribosomal subunit. Forms a cluster with proteins L3 and L14. The cofactor is Zn(2+).

In terms of biological role, binds to the 23S rRNA. The chain is Large ribosomal subunit protein eL24 from Staphylothermus marinus (strain ATCC 43588 / DSM 3639 / JCM 9404 / F1).